A 287-amino-acid chain; its full sequence is Lipoyl synthase (287 aa).

Residues cysteine 38, cysteine 43, cysteine 49, cysteine 64, cysteine 68, cysteine 71, and serine 277 each contribute to the [4Fe-4S] cluster site. Positions 50–266 (WSRGTATFLL…KTVAESLGLR (217 aa)) constitute a Radical SAM core domain.

Belongs to the radical SAM superfamily. Lipoyl synthase family. It depends on [4Fe-4S] cluster as a cofactor.

The protein resides in the cytoplasm. The catalysed reaction is [[Fe-S] cluster scaffold protein carrying a second [4Fe-4S](2+) cluster] + N(6)-octanoyl-L-lysyl-[protein] + 2 oxidized [2Fe-2S]-[ferredoxin] + 2 S-adenosyl-L-methionine + 4 H(+) = [[Fe-S] cluster scaffold protein] + N(6)-[(R)-dihydrolipoyl]-L-lysyl-[protein] + 4 Fe(3+) + 2 hydrogen sulfide + 2 5'-deoxyadenosine + 2 L-methionine + 2 reduced [2Fe-2S]-[ferredoxin]. It functions in the pathway protein modification; protein lipoylation via endogenous pathway; protein N(6)-(lipoyl)lysine from octanoyl-[acyl-carrier-protein]: step 2/2. In terms of biological role, catalyzes the radical-mediated insertion of two sulfur atoms into the C-6 and C-8 positions of the octanoyl moiety bound to the lipoyl domains of lipoate-dependent enzymes, thereby converting the octanoylated domains into lipoylated derivatives. The chain is Lipoyl synthase from Chlorobium phaeobacteroides (strain DSM 266 / SMG 266 / 2430).